Consider the following 118-residue polypeptide: Cytochrome c oxidase assembly protein COX20, mitochondrial (118 aa).

A2 carries the post-translational modification N-acetylalanine. The Mitochondrial intermembrane segment spans residues 2–33; that stretch reads AAPPEPGEPEERKSLKLLGFLDVENTPCARHS. The chain crosses the membrane as a helical span at residues 34-51; that stretch reads ILYGSLGSVVAGFGHFLF. Residues 52-60 lie on the Mitochondrial matrix side of the membrane; it reads TSRIRRSCD. A helical transmembrane segment spans residues 61-77; it reads VGVGGFILVTLGCWFHC. Residues 78–118 are Mitochondrial intermembrane-facing; sequence RYNYAKQRIQERIAREEIKKKILYEGTHLDPERKHNGSSSN.

This sequence belongs to the COX20 family. In terms of assembly, found in a complex with TMEM177, COA6, MT-CO2/COX2, COX18, SCO1 and SCO2. Interacts with SCO1, SCO2 and COA6 in a MT-CO2/COX2- and COX18-dependent manner. Interacts with COX18 in a MT-CO2/COX2-dependent manner. Interacts with MT-CO2/COX2. Interacts with TMEM177.

It is found in the mitochondrion inner membrane. Essential for the assembly of the mitochondrial respiratory chain complex IV (CIV), also known as cytochrome c oxidase. Acts as a chaperone in the early steps of cytochrome c oxidase subunit II (MT-CO2/COX2) maturation, stabilizing the newly synthesized protein and presenting it to metallochaperones SCO1/2 which in turn facilitates the incorporation of the mature MT-CO2/COX2 into the assembling CIV holoenzyme. The protein is Cytochrome c oxidase assembly protein COX20, mitochondrial (COX20) of Homo sapiens (Human).